We begin with the raw amino-acid sequence, 125 residues long: Holo-[acyl-carrier-protein] synthase (125 aa).

2 residues coordinate Mg(2+): Asp6 and Glu55.

It belongs to the P-Pant transferase superfamily. AcpS family. It depends on Mg(2+) as a cofactor.

It localises to the cytoplasm. The enzyme catalyses apo-[ACP] + CoA = holo-[ACP] + adenosine 3',5'-bisphosphate + H(+). Transfers the 4'-phosphopantetheine moiety from coenzyme A to a Ser of acyl-carrier-protein. The protein is Holo-[acyl-carrier-protein] synthase of Chlorobium phaeovibrioides (strain DSM 265 / 1930) (Prosthecochloris vibrioformis (strain DSM 265)).